The following is a 194-amino-acid chain: Large ribosomal subunit protein bL9 (194 aa).

Residues 166-184 show a composition bias toward low complexity; it reads AENQAQADEQAGELAAAAA. The disordered stretch occupies residues 166-194; sequence AENQAQADEQAGELAAAAAERGDMGGDEE. The span at 185-194 shows a compositional bias: basic and acidic residues; it reads ERGDMGGDEE.

This sequence belongs to the bacterial ribosomal protein bL9 family.

Binds to the 23S rRNA. This chain is Large ribosomal subunit protein bL9, found in Hyphomonas neptunium (strain ATCC 15444).